Consider the following 155-residue polypeptide: Transcriptional regulator MraZ (155 aa).

SpoVT-AbrB domains lie at 5 to 52 (TYEN…SQDR) and 81 to 124 (SMNL…EPAA).

The protein belongs to the MraZ family. As to quaternary structure, forms oligomers.

It localises to the cytoplasm. Its subcellular location is the nucleoid. In Pelagibacter ubique (strain HTCC1062), this protein is Transcriptional regulator MraZ.